The chain runs to 565 residues: Proline--tRNA ligase (565 aa).

Belongs to the class-II aminoacyl-tRNA synthetase family. ProS type 1 subfamily. In terms of assembly, homodimer.

It is found in the cytoplasm. The catalysed reaction is tRNA(Pro) + L-proline + ATP = L-prolyl-tRNA(Pro) + AMP + diphosphate. Functionally, catalyzes the attachment of proline to tRNA(Pro) in a two-step reaction: proline is first activated by ATP to form Pro-AMP and then transferred to the acceptor end of tRNA(Pro). As ProRS can inadvertently accommodate and process non-cognate amino acids such as alanine and cysteine, to avoid such errors it has two additional distinct editing activities against alanine. One activity is designated as 'pretransfer' editing and involves the tRNA(Pro)-independent hydrolysis of activated Ala-AMP. The other activity is designated 'posttransfer' editing and involves deacylation of mischarged Ala-tRNA(Pro). The misacylated Cys-tRNA(Pro) is not edited by ProRS. This is Proline--tRNA ligase from Lactobacillus acidophilus (strain ATCC 700396 / NCK56 / N2 / NCFM).